Consider the following 157-residue polypeptide: Crossover junction endodeoxyribonuclease RuvC (157 aa).

Catalysis depends on residues Asp-7, Glu-67, and Asp-139. Residues Asp-7, Glu-67, and Asp-139 each coordinate Mg(2+).

This sequence belongs to the RuvC family. As to quaternary structure, homodimer which binds Holliday junction (HJ) DNA. The HJ becomes 2-fold symmetrical on binding to RuvC with unstacked arms; it has a different conformation from HJ DNA in complex with RuvA. In the full resolvosome a probable DNA-RuvA(4)-RuvB(12)-RuvC(2) complex forms which resolves the HJ. It depends on Mg(2+) as a cofactor.

Its subcellular location is the cytoplasm. The catalysed reaction is Endonucleolytic cleavage at a junction such as a reciprocal single-stranded crossover between two homologous DNA duplexes (Holliday junction).. In terms of biological role, the RuvA-RuvB-RuvC complex processes Holliday junction (HJ) DNA during genetic recombination and DNA repair. Endonuclease that resolves HJ intermediates. Cleaves cruciform DNA by making single-stranded nicks across the HJ at symmetrical positions within the homologous arms, yielding a 5'-phosphate and a 3'-hydroxyl group; requires a central core of homology in the junction. The consensus cleavage sequence is 5'-(A/T)TT(C/G)-3'. Cleavage occurs on the 3'-side of the TT dinucleotide at the point of strand exchange. HJ branch migration catalyzed by RuvA-RuvB allows RuvC to scan DNA until it finds its consensus sequence, where it cleaves and resolves the cruciform DNA. The polypeptide is Crossover junction endodeoxyribonuclease RuvC (Prochlorococcus marinus subsp. pastoris (strain CCMP1986 / NIES-2087 / MED4)).